We begin with the raw amino-acid sequence, 216 residues long: Inactive ribonuclease-like protein 10 (216 aa).

The first 26 residues, 1–26, serve as a signal peptide directing secretion; the sequence is MKLNLVQIFFMLLMLLLGLGMGLGLG. The tract at residues 43-65 is disordered; the sequence is EFWSSDSQDKAEATEEGDGTQTT.

The protein belongs to the pancreatic ribonuclease family. The N-terminus is blocked. Glycosylated.

It is found in the secreted. Secreted proximal epididymal protein required for post-testicular sperm maturation and male fertility. May be involved in sperm adhesion to the egg zona pellucida. Does not have ribonuclease activity. The protein is Inactive ribonuclease-like protein 10 (RNASE10) of Homo sapiens (Human).